The following is a 727-amino-acid chain: Sodium-dependent neutral amino acid transporter SLC6A17 (727 aa).

Residues 1-68 lie on the Cytoplasmic side of the membrane; that stretch reads MPKNSKVTQR…DRPAWNSKLQ (68 aa). S13 and S20 each carry phosphoserine. The helical transmembrane segment at 69 to 89 threads the bilayer; sequence YILAQIGFSVGLGNIWRFPYL. Topologically, residues 90-96 are extracellular; that stretch reads CQKNGGG. The helical transmembrane segment at 97–116 threads the bilayer; that stretch reads AYLVPYLVLLIIIGIPLFFL. Topologically, residues 117-140 are cytoplasmic; sequence ELAVGQRIRRGSIGVWHYVCPRLG. Residues 141–161 form a helical membrane-spanning segment; the sequence is GIGFSSCIVCLFVGLYYNVII. The Extracellular segment spans residues 162–224; sequence GWSVFYFFKS…NSISESGGLN (63 aa). N186 carries N-linked (GlcNAc...) asparagine glycosylation. A helical membrane pass occupies residues 225 to 243; it reads WKMTVCLLVAWSIVGMAVV. Residues 244–251 are Cytoplasmic-facing; sequence KGIQSSGK. Residues 252–269 form a helical membrane-spanning segment; sequence VMYFSSLFPYVVLACFLV. Residues 270 to 304 are Extracellular-facing; that stretch reads RGLLLRGAVDGILHMFTPKLDKMLDPQVWREAATQ. The chain crosses the membrane as a helical span at residues 305 to 322; the sequence is VFFALGLGFGGVIAFSSY. Topologically, residues 323–333 are cytoplasmic; it reads NKQDNNCHFDA. Residues 334 to 355 form a helical membrane-spanning segment; it reads ALVSFINFFTSVLATLVVFAVL. Topologically, residues 356–451 are extracellular; the sequence is GFKANIMNEK…FIAFTEAMTH (96 aa). The residue at position 377 (Y377) is a Phosphotyrosine. N393 carries N-linked (GlcNAc...) asparagine glycosylation. Residues 452–471 traverse the membrane as a helical segment; that stretch reads FPASPFWSVMFFLMLINLGL. Over 472–494 the chain is Cytoplasmic; the sequence is GSMIGTMAGITTPIIDTFKVPKE. The helical transmembrane segment at 495 to 513 threads the bilayer; the sequence is MFTVGCCVFAFFVGLLFVQ. Residues 514–528 lie on the Extracellular side of the membrane; the sequence is RSGNYFVTMFDDYSA. A helical transmembrane segment spans residues 529–549; it reads TLPLTVIVILENIAVAWIYGT. Topologically, residues 550–569 are cytoplasmic; it reads KKFMQELTEMLGFRPYRFYF. The helical transmembrane segment at 570–591 threads the bilayer; it reads YMWKFVSPLCMAVLTTASIIQL. Topologically, residues 592 to 618 are extracellular; the sequence is GVSPPGYSAWIKEEAAERYLYFPNWAM. A helical membrane pass occupies residues 619 to 641; the sequence is ALLITLIAVATLPIPVVFILRHF. Residues 642–727 lie on the Cytoplasmic side of the membrane; it reads HLLSDGSNTL…LLASTPESEL (86 aa). Phosphoserine is present on residues S665 and S701. The interval 680-727 is disordered; that stretch reads VPSEAPSPMPTHRSYLGPGSTSPLESSSHPNGRYGSGYLLASTPESEL. Residues 698 to 709 show a composition bias toward polar residues; that stretch reads GSTSPLESSSHP.

Belongs to the sodium:neurotransmitter symporter (SNF) (TC 2.A.22) family. As to expression, found exclusively in the central nervous system and is more abundant in the cerebellum and the cerebral cortex. Expressed in PC-12 cell line.

Its subcellular location is the cytoplasmic vesicle. It is found in the secretory vesicle. It localises to the synaptic vesicle membrane. The protein resides in the postsynapse. The protein localises to the presynapse. The catalysed reaction is L-proline(in) + Na(+)(in) = L-proline(out) + Na(+)(out). It carries out the reaction L-leucine(in) + Na(+)(in) = L-leucine(out) + Na(+)(out). It catalyses the reaction glycine(in) + Na(+)(in) = glycine(out) + Na(+)(out). The enzyme catalyses L-alanine(in) + Na(+)(in) = L-alanine(out) + Na(+)(out). The catalysed reaction is L-glutamine(in) + Na(+)(in) = L-glutamine(out) + Na(+)(out). Synaptic vesicle transporter with apparent selectivity for neutral amino acids. The transport is sodium-coupled but chloride-independent, likely driven by the proton electrochemical gradient generated by vacuolar H(+)-ATPase in an overall electrogenic mechanism. May contribute to the synaptic uptake of neurotransmitter precursors in a process coupled in part to vesicle exocytosis. In Rattus norvegicus (Rat), this protein is Sodium-dependent neutral amino acid transporter SLC6A17.